A 394-amino-acid chain; its full sequence is Elongation factor Tu (394 aa).

Residues 10-204 (KPHVNVGTIG…HLDTYIPEPE (195 aa)) enclose the tr-type G domain. The tract at residues 19–26 (GHVDHGKT) is G1. Residue 19–26 (GHVDHGKT) participates in GTP binding. Thr-26 provides a ligand contact to Mg(2+). The tract at residues 60 to 64 (GITIN) is G2. The segment at 81 to 84 (DCPG) is G3. GTP-binding positions include 81–85 (DCPGH) and 136–139 (NKCD). Residues 136-139 (NKCD) are G4. Residues 174–176 (SAL) are G5.

It belongs to the TRAFAC class translation factor GTPase superfamily. Classic translation factor GTPase family. EF-Tu/EF-1A subfamily. In terms of assembly, monomer.

The protein localises to the cytoplasm. It catalyses the reaction GTP + H2O = GDP + phosphate + H(+). Functionally, GTP hydrolase that promotes the GTP-dependent binding of aminoacyl-tRNA to the A-site of ribosomes during protein biosynthesis. The polypeptide is Elongation factor Tu (Actinobacillus pleuropneumoniae serotype 5b (strain L20)).